The primary structure comprises 705 residues: Elongation factor G (705 aa).

A tr-type G domain is found at histidine 7–leucine 287. Residues alanine 16–threonine 23, aspartate 84–histidine 88, and asparagine 138–aspartate 141 each bind GTP.

Belongs to the TRAFAC class translation factor GTPase superfamily. Classic translation factor GTPase family. EF-G/EF-2 subfamily.

Its subcellular location is the cytoplasm. Catalyzes the GTP-dependent ribosomal translocation step during translation elongation. During this step, the ribosome changes from the pre-translocational (PRE) to the post-translocational (POST) state as the newly formed A-site-bound peptidyl-tRNA and P-site-bound deacylated tRNA move to the P and E sites, respectively. Catalyzes the coordinated movement of the two tRNA molecules, the mRNA and conformational changes in the ribosome. The protein is Elongation factor G of Bacteroides thetaiotaomicron (strain ATCC 29148 / DSM 2079 / JCM 5827 / CCUG 10774 / NCTC 10582 / VPI-5482 / E50).